The chain runs to 1071 residues: Methionine S-methyltransferase (1071 aa).

Alanine 2 carries the N-acetylalanine modification.

Belongs to the class I-like SAM-binding methyltransferase superfamily. In terms of assembly, homotetramer. Expressed in roots, rosette leaves and cauline leaves. Expressed at a lower level in developing seeds.

The protein resides in the cytoplasm. The catalysed reaction is L-methionine + S-adenosyl-L-methionine = S-methyl-L-methionine + S-adenosyl-L-homocysteine. Functionally, catalyzes the S-methylmethionine (SMM) biosynthesis from adenosyl-L-homocysteine (AdoMet) and methionine. SMM biosynthesis (by MMT1) and degradation (by HMT-1, HMT-2 and HMT-3) constitute the SMM cycle in plants, which is probably required to achieve short term control of AdoMet level. Also able to catalyze the selenium-methylmethionine (SeMM) from AdoMet and selenium-methionine (SeMet). May play a role in phoem sulfur transport; such function is however not essential. This Arabidopsis thaliana (Mouse-ear cress) protein is Methionine S-methyltransferase (MMT1).